A 140-amino-acid chain; its full sequence is Organic hydroperoxide resistance protein-like (140 aa).

This sequence belongs to the OsmC/Ohr family.

In Staphylococcus aureus (strain MSSA476), this protein is Organic hydroperoxide resistance protein-like.